Consider the following 173-residue polypeptide: Large ribosomal RNA subunit accumulation protein YceD (173 aa).

This sequence belongs to the DUF177 domain family.

In terms of biological role, plays a role in synthesis, processing and/or stability of 23S rRNA. This Salmonella typhi protein is Large ribosomal RNA subunit accumulation protein YceD (yceD).